Consider the following 156-residue polypeptide: Small ribosomal subunit protein bS16 (156 aa).

Composition is skewed to low complexity over residues 113–123 and 137–156; these read AESGTTAAATT and EAPA…ASES. Positions 113–156 are disordered; the sequence is AESGTTAAATTPKKKKAPKKDEAAEAPAEAAEAPAEAADAASES.

The protein belongs to the bacterial ribosomal protein bS16 family.

The chain is Small ribosomal subunit protein bS16 from Mycolicibacterium smegmatis (strain ATCC 700084 / mc(2)155) (Mycobacterium smegmatis).